The sequence spans 372 residues: Putative 26S proteasome regulatory subunit homolog MTBMA_c13930 (372 aa).

164–171 (GSPGTGKT) is an ATP binding site.

Belongs to the AAA ATPase family.

Functionally, the 26S proteasome is involved in the ATP-dependent degradation of ubiquitinated proteins. The regulatory (or ATPase) complex confers ATP dependency and substrate specificity to the 26S complex. The sequence is that of Putative 26S proteasome regulatory subunit homolog MTBMA_c13930 from Methanothermobacter marburgensis (strain ATCC BAA-927 / DSM 2133 / JCM 14651 / NBRC 100331 / OCM 82 / Marburg) (Methanobacterium thermoautotrophicum).